Consider the following 98-residue polypeptide: Feather beta keratin (98 aa).

N-acetylserine is present on serine 2.

It belongs to the avian keratin family. As to quaternary structure, the avian keratins (F-ker, S-ker, C-ker and B-ker) are a complex mixture of very similar polypeptides.

This is Feather beta keratin from Cathartes aura (Turkey vulture).